The chain runs to 454 residues: Chaperone SurA (454 aa).

Residues 1–28 form the signal peptide; it reads MKISSFRKGRWLGALALFAVVCWSMADA. PpiC domains lie at 177-278 and 287-386; these read DREY…KMLA and LTKT…QVLE. The interval 431–454 is disordered; that stretch reads LDETPASPGEDAPAGEDSPETFMR. A compositionally biased stretch (acidic residues) spans 443–454; the sequence is PAGEDSPETFMR.

The protein resides in the periplasm. The catalysed reaction is [protein]-peptidylproline (omega=180) = [protein]-peptidylproline (omega=0). Functionally, chaperone involved in the correct folding and assembly of outer membrane proteins. Recognizes specific patterns of aromatic residues and the orientation of their side chains, which are found more frequently in integral outer membrane proteins. May act in both early periplasmic and late outer membrane-associated steps of protein maturation. This is Chaperone SurA from Methylococcus capsulatus (strain ATCC 33009 / NCIMB 11132 / Bath).